Consider the following 407-residue polypeptide: TOM1-like protein 1 (407 aa).

G2 is modified (N-acetylglycine). Residues 55–183 (ATTENLEEPD…SLKARGIRFP (129 aa)) enclose the VHS domain. One can recognise a GAT domain in the interval 228-315 (FTAEQTKEAF…TLSKYEEMNK (88 aa)). A disordered region spans residues 315–407 (KPSAPLTSHE…SSKNDDLIRF (93 aa)). S337 carries the phosphoserine modification. The segment covering 337–347 (SPIHGREESLV) has biased composition (basic and acidic residues). Gly residues predominate over residues 353-364 (VRGGFHGGGGSG). Residues 388–407 (PDHDPKKEQSSSKNDDLIRF) show a composition bias toward basic and acidic residues.

The protein belongs to the TOM1 family. Ubiquitously expressed.

The protein resides in the membrane. In terms of biological role, might contribute to the loading of the ESCRT machinery. The protein is TOM1-like protein 1 of Arabidopsis thaliana (Mouse-ear cress).